A 181-amino-acid chain; its full sequence is Probable calcium-binding protein CML16 (181 aa).

The interval 1 to 24 is disordered; sequence MSNTTEKKMPQQQQVERPTALAPA. 4 EF-hand domains span residues 23–58, 63–98, 100–135, and 136–171; these read PADA…IAPP, AGGR…GRGD, EHEA…IGEG, and CSAE…DAAA. Residues Asp-36, Asp-38, Asp-40, Arg-42, Glu-47, Asp-76, Asp-78, Asp-80, Glu-87, Asp-113, Asp-115, Asp-117, Arg-119, Glu-124, Asp-149, Asp-151, Asp-153, Cys-155, and Glu-160 each coordinate Ca(2+).

Its function is as follows. Potential calcium sensor. In Oryza sativa subsp. japonica (Rice), this protein is Probable calcium-binding protein CML16 (CML16).